The primary structure comprises 459 residues: Alcohol acyl transferase 1 allele GSa (459 aa).

Catalysis depends on proton acceptor residues His-164 and Asn-385.

Belongs to the plant acyltransferase family. As to expression, highly expressed in the cortex and skin of ripe fruit.

It catalyses the reaction butan-1-ol + acetyl-CoA = butyl acetate + CoA. The catalysed reaction is butan-1-ol + butanoyl-CoA = butyl butanoate + CoA. It carries out the reaction butan-1-ol + hexanoyl-CoA = butyl hexanoate + CoA. The enzyme catalyses hexan-1-ol + butanoyl-CoA = hexyl butanoate + CoA. It catalyses the reaction hexan-1-ol + acetyl-CoA = hexyl acetate + CoA. The catalysed reaction is 2-methylbutan-1-ol + butanoyl-CoA = 2-methylbutyl butanoate + CoA. It carries out the reaction ethanol + butanoyl-CoA = ethyl butanoate + CoA. The enzyme catalyses hexanoyl-CoA + ethanol = ethyl hexanoate + CoA. In terms of biological role, involved in the biosynthesis of volatile esters which confer ripe apple fruit flavor. Alcohol acyl transferase that can use a wide range of alcohols as substrate, including 2-methylbutanol, hexanol and ethanol, to produce esters such as butyl butanoate, butyl hexanoate, hexyl butanoate, ethyl butanoate and ethyl hexanoate and, to some extent, 2-methylbutyl acetate (2MBA), butyl acetate, hexyl acetate and 2-methylbutyl butanoate (2MBB). This is Alcohol acyl transferase 1 allele GSa from Malus domestica (Apple).